The primary structure comprises 238 residues: Orotidine 5'-phosphate decarboxylase (238 aa).

Residues aspartate 10, lysine 32, 59-68 (DLKLHDIPNT), threonine 122, arginine 184, glutamine 193, glycine 213, and arginine 214 contribute to the substrate site. The active-site Proton donor is lysine 61.

Belongs to the OMP decarboxylase family. Type 1 subfamily. As to quaternary structure, homodimer.

It carries out the reaction orotidine 5'-phosphate + H(+) = UMP + CO2. The protein operates within pyrimidine metabolism; UMP biosynthesis via de novo pathway; UMP from orotate: step 2/2. Catalyzes the decarboxylation of orotidine 5'-monophosphate (OMP) to uridine 5'-monophosphate (UMP). The sequence is that of Orotidine 5'-phosphate decarboxylase from Bacillus thuringiensis subsp. konkukian (strain 97-27).